The following is a 231-amino-acid chain: N-acetylmuramate alpha-1-phosphate uridylyltransferase (231 aa).

Residues Gly11–Arg13 and Lys23 each bind UTP. Residue Asn106 coordinates substrate. Asp108 lines the Mg(2+) pocket. The substrate site is built by Asp146 and Asp213. Position 213 (Asp213) interacts with Mg(2+).

It belongs to the nucleotidyltransferase MurU family. As to quaternary structure, monomer. Requires Mg(2+) as cofactor.

The catalysed reaction is N-acetyl-alpha-D-muramate 1-phosphate + UDP + H(+) = UDP-N-acetyl-alpha-D-muramate + phosphate. The protein operates within cell wall biogenesis; peptidoglycan recycling. Its function is as follows. Catalyzes the formation of UDP-N-acetylmuramate (UDP-MurNAc), a crucial precursor of the bacterial peptidoglycan cell wall, from UTP and MurNAc-alpha-1P. Is likely involved in peptidoglycan recycling as part of a cell wall recycling pathway that bypasses de novo biosynthesis of the peptidoglycan precursor UDP-MurNAc. Is able to complement the fosfomycin sensitivity phenotype of a P.putida mutant lacking murU. The chain is N-acetylmuramate alpha-1-phosphate uridylyltransferase from Neisseria meningitidis serogroup B (strain ATCC BAA-335 / MC58).